A 667-amino-acid polypeptide reads, in one-letter code: E3 ubiquitin-protein ligase Midline-1 (667 aa).

Residues 10-60 (CPICLELFEDPLLLPCAHSLCFNCAHRILVSHCATNESVESITAFQCPTCR) form an RING-type zinc finger. S92 and S96 each carry phosphoserine. B box-type zinc fingers lie at residues 116–165 (KVLC…IEPI) and 172–212 (GLMC…VAAL). Residues C119, C122, C134, C137, C142, C145, H150, H159, C175, H178, C198, and H204 each contribute to the Zn(2+) site. The stretch at 205-264 (RDHQVAALSERYDKLKQNLESNLTNLIKRNTELETLLAKLIQTCQHVEVNASRQEAKLTE) forms a coiled coil. One can recognise a COS domain in the interval 320-379 (LKENDHARFLQTAKNITERVSMATASSQVLIPEINLNDTFDTFALDFSREKKLLECLDYL). The Fibronectin type-III domain occupies 381–484 (APNPPTIREE…EPGKLKTNSQ (104 aa)). A compositionally biased stretch (polar residues) spans 471–485 (SRSSEPGKLKTNSQP). Positions 471 to 524 (SRSSEPGKLKTNSQPFKLDPKSAHRKLKVSHDNLTVERDESSSKKSHTPERFTS) are disordered. The B30.2/SPRY domain maps to 482 to 659 (NSQPFKLDPK…IITGLPIPDH (178 aa)). A compositionally biased stretch (basic and acidic residues) spans 499–520 (VSHDNLTVERDESSSKKSHTPE). A Phosphoserine modification is found at S511.

It belongs to the TRIM/RBCC family. In terms of assembly, homodimer or heterodimer with MID2. Interacts with IGBP1. Interacts with TRIM16. Phosphorylated on serine and threonine residues. In terms of tissue distribution, in the fetus, highest expression found in kidney, followed by brain and lung. Expressed at low levels in fetal liver. In the adult, most abundant in heart, placenta and brain.

It localises to the cytoplasm. The protein resides in the cytoskeleton. Its subcellular location is the spindle. The catalysed reaction is S-ubiquitinyl-[E2 ubiquitin-conjugating enzyme]-L-cysteine + [acceptor protein]-L-lysine = [E2 ubiquitin-conjugating enzyme]-L-cysteine + N(6)-ubiquitinyl-[acceptor protein]-L-lysine.. Its function is as follows. Has E3 ubiquitin ligase activity towards IGBP1, promoting its monoubiquitination, which results in deprotection of the catalytic subunit of protein phosphatase PP2A, and its subsequent degradation by polyubiquitination. The chain is E3 ubiquitin-protein ligase Midline-1 (MID1) from Homo sapiens (Human).